Here is a 300-residue protein sequence, read N- to C-terminus: N-acetylmuramic acid 6-phosphate etherase (300 aa).

The region spanning 57 to 220 is the SIS domain; that stretch reads ITHAFAHGGR…TSGAMIRSGK (164 aa). Catalysis depends on Glu85, which acts as the Proton donor. The active site involves Glu116.

The protein belongs to the GCKR-like family. MurNAc-6-P etherase subfamily. In terms of assembly, homodimer.

The enzyme catalyses N-acetyl-D-muramate 6-phosphate + H2O = N-acetyl-D-glucosamine 6-phosphate + (R)-lactate. Its pathway is amino-sugar metabolism; 1,6-anhydro-N-acetylmuramate degradation. It participates in amino-sugar metabolism; N-acetylmuramate degradation. It functions in the pathway cell wall biogenesis; peptidoglycan recycling. In terms of biological role, specifically catalyzes the cleavage of the D-lactyl ether substituent of MurNAc 6-phosphate, producing GlcNAc 6-phosphate and D-lactate. Together with AnmK, is also required for the utilization of anhydro-N-acetylmuramic acid (anhMurNAc) either imported from the medium or derived from its own cell wall murein, and thus plays a role in cell wall recycling. The sequence is that of N-acetylmuramic acid 6-phosphate etherase from Vibrio vulnificus (strain CMCP6).